The sequence spans 507 residues: ATP synthase subunit alpha, chloroplastic (507 aa).

170-177 (GDRQTGKT) serves as a coordination point for ATP.

This sequence belongs to the ATPase alpha/beta chains family. As to quaternary structure, F-type ATPases have 2 components, CF(1) - the catalytic core - and CF(0) - the membrane proton channel. CF(1) has five subunits: alpha(3), beta(3), gamma(1), delta(1), epsilon(1). CF(0) has four main subunits: a, b, b' and c.

Its subcellular location is the plastid. The protein resides in the chloroplast thylakoid membrane. The enzyme catalyses ATP + H2O + 4 H(+)(in) = ADP + phosphate + 5 H(+)(out). Functionally, produces ATP from ADP in the presence of a proton gradient across the membrane. The alpha chain is a regulatory subunit. The chain is ATP synthase subunit alpha, chloroplastic from Lemna minor (Common duckweed).